The sequence spans 280 residues: MAVDIAMKFYLRSPPLRRDRVECRIARKSNEPLRPCIQTTDKTLLSELSNQENKVKKRVSFADSRGLALTMVKVYSDFDDELEIPFNISELIDNIVNLTTVEKERFVLDFVQPSADYLDFRNRLQADSVCLENCMLKDKALVGTVKVKNLAFQKCVKIRMTFDSWQTYTDYDCQYVKDTYAGSDKDTFSFDVSLPEGIQSNTRIEFAVYFECEGRIFWDSNKSLNYKIARQDHRIPSNFESRHYDPVCMSVDQYGSPRCSYGIFPELPTYSGFDKLGPYY.

The short motif at Arg-58 to Phe-61 is the PP1-binding motif element. One can recognise a CBM21 domain in the interval Arg-121–Ala-229.

Interacts with glycogen, PPP1CC catalytic subunit of PP1 and PYGL. Associates with glycogen particles. Forms complexes with debranching enzyme, glycogen phosphorylase, glycogen synthase and phosphorylase kinase which is necessary for its regulation of PP1 activity.

Functionally, acts as a glycogen-targeting subunit for phosphatase PP1. Facilitates interaction of the PP1 with enzymes of the glycogen metabolism and regulates its activity. Suppresses the rate at which PP1 dephosphorylates (inactivates) glycogen phosphorylase and enhances the rate at which it activates glycogen synthase and therefore limits glycogen breakdown. This is Protein phosphatase 1 regulatory subunit 3B-A (ppp1r3b-a) from Xenopus laevis (African clawed frog).